Here is a 105-residue protein sequence, read N- to C-terminus: Insulin (105 aa).

A signal peptide spans 1 to 24 (MALWTRLVPLLALLALWAPAPAHA). 3 disulfides stabilise this stretch: cysteine 31–cysteine 91, cysteine 43–cysteine 104, and cysteine 90–cysteine 95. Positions 57–82 (EVEGPQVGALELAGGPGAGGLEGPPQ) are cleaved as a propeptide — c peptide.

It belongs to the insulin family. As to quaternary structure, heterodimer of a B chain and an A chain linked by two disulfide bonds.

The protein resides in the secreted. Insulin decreases blood glucose concentration. It increases cell permeability to monosaccharides, amino acids and fatty acids. It accelerates glycolysis, the pentose phosphate cycle, and glycogen synthesis in liver. This chain is Insulin (INS), found in Ovis aries (Sheep).